The chain runs to 647 residues: Macrolide export ATP-binding/permease protein MacB 2 (647 aa).

Residues 6–244 enclose the ABC transporter domain; that stretch reads IQLKGIERRY…VTPTAAPAGK (239 aa). 42-49 lines the ATP pocket; the sequence is GASGSGKS. Positions 223 to 247 are disordered; the sequence is QEDSGRKPAAVPVTPTAAPAGKEGV. Low complexity predominate over residues 230–242; it reads PAAVPVTPTAAPA. The next 4 helical transmembrane spans lie at 273–293, 527–547, 581–601, and 610–630; these read FLTM…VALG, IAVI…LVSV, LGGM…SLFV, and LFSI…FGYL.

It belongs to the ABC transporter superfamily. Macrolide exporter (TC 3.A.1.122) family. Homodimer. Part of the tripartite efflux system MacAB-TolC, which is composed of an inner membrane transporter, MacB, a periplasmic membrane fusion protein, MacA, and an outer membrane component, TolC. The complex forms a large protein conduit and can translocate molecules across both the inner and outer membranes. Interacts with MacA.

It localises to the cell inner membrane. In terms of biological role, part of the tripartite efflux system MacAB-TolC. MacB is a non-canonical ABC transporter that contains transmembrane domains (TMD), which form a pore in the inner membrane, and an ATP-binding domain (NBD), which is responsible for energy generation. Confers resistance against macrolides. The sequence is that of Macrolide export ATP-binding/permease protein MacB 2 from Aeromonas hydrophila subsp. hydrophila (strain ATCC 7966 / DSM 30187 / BCRC 13018 / CCUG 14551 / JCM 1027 / KCTC 2358 / NCIMB 9240 / NCTC 8049).